Here is a 298-residue protein sequence, read N- to C-terminus: Mimecan (298 aa).

Residues 1–19 form the signal peptide; that stretch reads METVHSTFLLLLFVPLTQQ. The N-linked (GlcNAc...) (keratan sulfate) asparagine glycan is linked to asparagine 88. LRR repeat units follow at residues 112–131, 132–155, 156–179, 180–199, 200–225, 226–246, and 247–277; these read DAVPPLPKESAYLYARFNKI, KKLTAKDFADMPNLRRLDFTGNLI, EDIEDGTFSKLSLLEELTLAENQL, LRLPVLPPKLTLLNAKHNKI, KSKGIKANTFKKLNKLSFLYLDHNDL, ESVPPNLPESLRVIHLQFNSI, and SSLTDDTFCKANDTRYIRERIEEIRLEGNPI. A disulfide bridge links cysteine 255 with cysteine 288. Asparagine 258 carries an N-linked (GlcNAc...) (keratan sulfate) asparagine glycan.

This sequence belongs to the small leucine-rich proteoglycan (SLRP) family. SLRP class III subfamily. Contains keratan sulfate.

It is found in the secreted. The protein resides in the extracellular space. It localises to the extracellular matrix. Functionally, induces bone formation in conjunction with TGF-beta-1 or TGF-beta-2. This Mus musculus (Mouse) protein is Mimecan (Ogn).